A 358-amino-acid chain; its full sequence is Probable ABC transporter periplasmic-binding protein y4fP (358 aa).

A signal peptide spans 1 to 46; sequence MRNVIKLTWSRRKRSASLDKGENIMKLAFAFATAAIVVAAAFPALA.

This sequence belongs to the bacterial solute-binding protein 1 family.

It is found in the periplasm. Its function is as follows. Probably part of the binding-protein-dependent transport system y4fNOP. In Sinorhizobium fredii (strain NBRC 101917 / NGR234), this protein is Probable ABC transporter periplasmic-binding protein y4fP.